The chain runs to 179 residues: ATP synthase subunit delta (179 aa).

Belongs to the ATPase delta chain family. As to quaternary structure, F-type ATPases have 2 components, F(1) - the catalytic core - and F(0) - the membrane proton channel. F(1) has five subunits: alpha(3), beta(3), gamma(1), delta(1), epsilon(1). F(0) has three main subunits: a(1), b(2) and c(10-14). The alpha and beta chains form an alternating ring which encloses part of the gamma chain. F(1) is attached to F(0) by a central stalk formed by the gamma and epsilon chains, while a peripheral stalk is formed by the delta and b chains.

The protein localises to the cell inner membrane. Functionally, f(1)F(0) ATP synthase produces ATP from ADP in the presence of a proton or sodium gradient. F-type ATPases consist of two structural domains, F(1) containing the extramembraneous catalytic core and F(0) containing the membrane proton channel, linked together by a central stalk and a peripheral stalk. During catalysis, ATP synthesis in the catalytic domain of F(1) is coupled via a rotary mechanism of the central stalk subunits to proton translocation. In terms of biological role, this protein is part of the stalk that links CF(0) to CF(1). It either transmits conformational changes from CF(0) to CF(1) or is implicated in proton conduction. This Maricaulis maris (strain MCS10) (Caulobacter maris) protein is ATP synthase subunit delta.